The chain runs to 369 residues: Ribosomal RNA large subunit methyltransferase M (369 aa).

Residues Ser198, 231-234 (APGG), Asp250, Asp270, and Asp287 each bind S-adenosyl-L-methionine. Lys316 acts as the Proton acceptor in catalysis.

The protein belongs to the class I-like SAM-binding methyltransferase superfamily. RNA methyltransferase RlmE family. RlmM subfamily. In terms of assembly, monomer.

The protein localises to the cytoplasm. It carries out the reaction cytidine(2498) in 23S rRNA + S-adenosyl-L-methionine = 2'-O-methylcytidine(2498) in 23S rRNA + S-adenosyl-L-homocysteine + H(+). Catalyzes the 2'-O-methylation at nucleotide C2498 in 23S rRNA. This chain is Ribosomal RNA large subunit methyltransferase M, found in Idiomarina loihiensis (strain ATCC BAA-735 / DSM 15497 / L2-TR).